The primary structure comprises 146 residues: Hemoglobin subunit beta (146 aa).

An N-acetylalanine modification is found at Ala-1. Positions 2–146 (SFDPHEKQLI…VAAALAAEYH (145 aa)) constitute a Globin domain. Heme b-binding residues include His-63 and His-92.

The protein belongs to the globin family. In terms of assembly, heterotetramer of two alpha chains and two beta chains. As to expression, red blood cells.

Its function is as follows. Involved in oxygen transport from the lung to the various peripheral tissues. This chain is Hemoglobin subunit beta (HBB), found in Crocodylus niloticus (Nile crocodile).